Reading from the N-terminus, the 517-residue chain is MGTSAKMQKYDRQVRLWKAEGQNAIEKSHVCLLYANTVGCEALKNLILPGIGSFAVVDDTSVDFSMDGMNFFIQYDQEGKSRARCTASLLQQLNPNVEMEYLEMSPEALIDKNIEYFSKFSVVLSSNLKEKPLFRLEEYLRSHKIPLLHFNSVGFAGILRISTHEYTTTQSQPELPQDLRLKNPWPELINYVKSMDLDNMDSSSLSEIPYIVLIIHVLLKVSPAHAQNSQEADDCAMFRKIMEEYKGKCDSENIEEASSNSWKAFKEYKLPSNVYEVLHDTRCVKIQEDSESFWIMAHCLKMFYDETEFLPLSGLLPDMNCSTQQYVKLQVIYKEKSENDILKFKKYVQQTLKRLNRSVEEITDLEIKHFSRNCLNIKVMDFKTMKEEYQPTSNSVLESSSIDSNSLLPWYLAFRIYDTILEKHGKNYKEAFSDTTKTISVAQSFLSQIGLEKFFDVVYTAIQELERADGHELHSISSFIGGIVAQETIKLLAQQYLPLNNTFVFDGVHSRTETFKL.

Belongs to the ubiquitin-activating E1 family. ULA1 subfamily. In terms of assembly, heterodimer of uba3 and ula1. The complex binds NEDD8/ubl1 and ubc12.

It is found in the cytoplasm. It localises to the nucleus. The protein operates within protein modification; protein neddylation. Regulatory subunit of the dimeric uba3-ula1 E1 enzyme. E1 activates NEDD8/ubl1 by first adenylating its C-terminal glycine residue with ATP, thereafter linking this residue to the side chain of the catalytic cysteine, yielding a NEDD8-UBA3 thioester and free AMP. E1 finally transfers NEDD8 to the catalytic cysteine of ubc12. The protein is NEDD8-activating enzyme E1 regulatory subunit (uba5) of Schizosaccharomyces pombe (strain 972 / ATCC 24843) (Fission yeast).